Here is a 176-residue protein sequence, read N- to C-terminus: Odorant-binding protein 2a (176 aa).

The first 19 residues, 1-19 (MKSLLLTILLLGLVAVLKA), serve as a signal peptide directing secretion. Residues asparagine 42 and asparagine 124 are each glycosylated (N-linked (GlcNAc...) asparagine). Cysteine 79 and cysteine 172 are oxidised to a cystine.

The protein belongs to the calycin superfamily. Lipocalin family. As to expression, expressed in the liver (at protein level). Expressed in epididymis.

It is found in the secreted. In terms of biological role, involved in the regulation of systematic glucose homeostasis and insulin sensitivity. Involved in the regulation of liver lipid levels by positive regulation of hepatic lipogenesis and negative regulation of fatty acid beta-oxidation; via downstream transcriptional regulation of CPT1A and hepatic lipogenic program gene expression. May regulate hepatic lipogenesis and fatty acid beta-oxidation in an autocrine or paracrine manner. This Mus musculus (Mouse) protein is Odorant-binding protein 2a (Obp2a).